We begin with the raw amino-acid sequence, 510 residues long: Chromosomal replication initiator protein DnaA (510 aa).

A domain I, interacts with DnaA modulators region spans residues 1–107 (MTNDPGSGFA…VRIAPPPADD (107 aa)). The interval 107 to 169 (DDDDSVAAAV…ADTSASAGGT (63 aa)) is domain II. The disordered stretch occupies residues 119 to 168 (PGLEASPETSQEVSDEIDDFGENAPNSRQSWPTHFKKRSTDADTSASAGG). The segment at 170–386 (SLNRRYTFDT…GALIRVTAFA (217 aa)) is domain III, AAA+ region. Positions 214, 216, 217, and 218 each coordinate ATP. The tract at residues 387-510 (SLNKTPIDKA…TTRIRQRSKR (124 aa)) is domain IV, binds dsDNA.

The protein belongs to the DnaA family. Oligomerizes as a right-handed, spiral filament on DNA at oriC.

The protein localises to the cytoplasm. In terms of biological role, plays an essential role in the initiation and regulation of chromosomal replication. ATP-DnaA binds to the origin of replication (oriC) to initiate formation of the DNA replication initiation complex once per cell cycle. Binds the DnaA box (a 9 base pair repeat at the origin) and separates the double-stranded (ds)DNA. Forms a right-handed helical filament on oriC DNA; dsDNA binds to the exterior of the filament while single-stranded (ss)DNA is stabiized in the filament's interior. The ATP-DnaA-oriC complex binds and stabilizes one strand of the AT-rich DNA unwinding element (DUE), permitting loading of DNA polymerase. After initiation quickly degrades to an ADP-DnaA complex that is not apt for DNA replication. Binds acidic phospholipids. The chain is Chromosomal replication initiator protein DnaA from Mycobacterium marinum (strain ATCC BAA-535 / M).